The following is a 136-amino-acid chain: Ciliary microtubule inner protein 1 (136 aa).

The protein localises to the cell projection. Its subcellular location is the cilium. The polypeptide is Ciliary microtubule inner protein 1 (Cimip1) (Mus musculus (Mouse)).